Reading from the N-terminus, the 354-residue chain is Molybdenum import ATP-binding protein ModC (354 aa).

Residues 1–229 enclose the ABC transporter domain; the sequence is MLELDFEQQL…SALRLWLQKE (229 aa). Position 31–38 (31–38) interacts with ATP; that stretch reads GLSGAGKT. The Mop domain occupies 289-354; sequence GSSIRNILAV…IKSVSFHRQL (66 aa).

It belongs to the ABC transporter superfamily. Molybdate importer (TC 3.A.1.8) family. In terms of assembly, the complex is composed of two ATP-binding proteins (ModC), two transmembrane proteins (ModB) and a solute-binding protein (ModA).

The protein resides in the cell inner membrane. The catalysed reaction is molybdate(out) + ATP + H2O = molybdate(in) + ADP + phosphate + H(+). Its function is as follows. Part of the ABC transporter complex ModABC involved in molybdenum import. Responsible for energy coupling to the transport system. The protein is Molybdenum import ATP-binding protein ModC of Photorhabdus laumondii subsp. laumondii (strain DSM 15139 / CIP 105565 / TT01) (Photorhabdus luminescens subsp. laumondii).